A 514-amino-acid polypeptide reads, in one-letter code: MNIQEEIKKRRTFAIISHPDAGKTTITEQLLYFGGEIRDAGTVKGKKTGTFAKSDWMDIEKQRGISVTSSVMQFDYDGKRVNILDTPGHEDFSEDTYRTLMAVDAAVMVVDSAKGIEAQTKKLFEVVKHRGIPVFTFMNKLDRDGREPLDLLQELEEILGIASYPMNWPIGMGKAFEGLYDLYNQRLELYKGDERFASLEDGDKLFGSNPFYEQVKDDIELLNEAGNEFSEEAILAGELTPVFFGSALTNFGVQTFLEIFLKFAPEPHGHKKTDGEIVDPYDKDFSGFVFKIQANMDPRHRDRIAFVRIVSGEFERGMSVNLPRTGKGAKLSNVTQFMAESRENVTNAVAGDIIGVYDTGTYQVGDTLTVGKNKFEFEPLPTFTPEIFMKVSAKNVMKQKSFHKGIEQLVQEGAVQLYKNYQTGEYMLGAVGQLQFEVFKHRMESEYNAEVVMNPMGKKTVRWIKPEDLDERMSSSRNILAKDRFDQPVFLFENDFALRWFADKYPDVELEEKM.

The 261-residue stretch at 8–268 folds into the tr-type G domain; the sequence is KKRRTFAIIS…IFLKFAPEPH (261 aa). GTP is bound by residues 17–24, 85–89, and 139–142; these read SHPDAGKT, DTPGH, and NKLD.

This sequence belongs to the TRAFAC class translation factor GTPase superfamily. Classic translation factor GTPase family. PrfC subfamily.

The protein localises to the cytoplasm. Its function is as follows. Increases the formation of ribosomal termination complexes and stimulates activities of RF-1 and RF-2. It binds guanine nucleotides and has strong preference for UGA stop codons. It may interact directly with the ribosome. The stimulation of RF-1 and RF-2 is significantly reduced by GTP and GDP, but not by GMP. This Streptococcus pneumoniae (strain P1031) protein is Peptide chain release factor 3.